The following is a 575-amino-acid chain: Arginine--tRNA ligase (575 aa).

Positions 131–141 (ANPTGPLHVGH) match the 'HIGH' region motif.

It belongs to the class-I aminoacyl-tRNA synthetase family. As to quaternary structure, monomer.

It is found in the cytoplasm. The catalysed reaction is tRNA(Arg) + L-arginine + ATP = L-arginyl-tRNA(Arg) + AMP + diphosphate. This is Arginine--tRNA ligase from Jannaschia sp. (strain CCS1).